The chain runs to 143 residues: Hemoglobin anodic subunit alpha (143 aa).

N-acetylserine is present on serine 2. Residues 2 to 143 (SLSAKDMAVV…FTLALSERYR (142 aa)) enclose the Globin domain. Histidine 60 contributes to the O2 binding site. Histidine 89 lines the heme b pocket.

The protein belongs to the globin family. As to quaternary structure, heterotetramer of two alpha chains and two beta chains. In terms of tissue distribution, red blood cells.

Its function is as follows. Involved in oxygen transport from gills to the various peripheral tissues. The polypeptide is Hemoglobin anodic subunit alpha (hba) (Anguilla anguilla (European freshwater eel)).